We begin with the raw amino-acid sequence, 535 residues long: 4-hydroxy-3-methylbut-2-enyl diphosphate reductase, apicoplast (535 aa).

Position 231 (C231) interacts with [4Fe-4S] cluster. (2E)-4-hydroxy-3-methylbut-2-enyl diphosphate is bound by residues H260 and H293. Dimethylallyl diphosphate is bound by residues H260 and H293. 2 residues coordinate isopentenyl diphosphate: H260 and H293. C315 is a binding site for [4Fe-4S] cluster. Position 343 (H343) interacts with (2E)-4-hydroxy-3-methylbut-2-enyl diphosphate. H343 serves as a coordination point for dimethylallyl diphosphate. H343 contacts isopentenyl diphosphate. Residue E345 is the Proton donor of the active site. Residue T383 coordinates (2E)-4-hydroxy-3-methylbut-2-enyl diphosphate. C413 lines the [4Fe-4S] cluster pocket. (2E)-4-hydroxy-3-methylbut-2-enyl diphosphate contacts are provided by S441, S442, N443, and S485. Dimethylallyl diphosphate contacts are provided by S441, S442, N443, and S485. Positions 441, 442, 443, and 485 each coordinate isopentenyl diphosphate.

It belongs to the IspH family. Interacts with Fd/ferredoxin. Requires [4Fe-4S] cluster as cofactor.

It localises to the plastid. The protein localises to the apicoplast. It catalyses the reaction dimethylallyl diphosphate + 2 oxidized [2Fe-2S]-[ferredoxin] + H2O = (2E)-4-hydroxy-3-methylbut-2-enyl diphosphate + 2 reduced [2Fe-2S]-[ferredoxin] + 2 H(+). The catalysed reaction is isopentenyl diphosphate + 2 oxidized [2Fe-2S]-[ferredoxin] + H2O = (2E)-4-hydroxy-3-methylbut-2-enyl diphosphate + 2 reduced [2Fe-2S]-[ferredoxin] + 2 H(+). It participates in isoprenoid biosynthesis; dimethylallyl diphosphate biosynthesis; dimethylallyl diphosphate from (2E)-4-hydroxy-3-methylbutenyl diphosphate: step 1/1. Its pathway is isoprenoid biosynthesis; isopentenyl diphosphate biosynthesis via DXP pathway; isopentenyl diphosphate from 1-deoxy-D-xylulose 5-phosphate: step 6/6. Catalyzes the conversion of 1-hydroxy-2-methyl-2-(E)-butenyl 4-diphosphate (HMBPP) into a mixture of isopentenyl diphosphate (IPP) and dimethylallyl diphosphate (DMAPP). Acts in the terminal step of the DOXP/MEP pathway for isoprenoid precursor biosynthesis. This Plasmodium falciparum (isolate 3D7) protein is 4-hydroxy-3-methylbut-2-enyl diphosphate reductase, apicoplast.